A 747-amino-acid polypeptide reads, in one-letter code: Mediator of RNA polymerase II transcription subunit 25 (747 aa).

The segment at M1–L226 is interaction with the Mediator complex. Disordered stretches follow at residues G233–V274 and L299–G390. 2 stretches are compositionally biased toward pro residues: residues Q263–Y272 and P326–S342. The interaction with VP16 stretch occupies residues L389–N543. Residues V395 to K545 are interaction with CREBBP. The interval Q548–I747 is disordered. Interaction with RARA stretches follow at residues A564 to P653 and P640 to Q707. Low complexity predominate over residues A598–A611. The span at Q612 to I634 shows a compositional bias: pro residues. Positions L646–L650 match the LXXLL motif motif. 3 stretches are compositionally biased toward pro residues: residues N652 to Q664, P673 to H683, and L691 to P713. R725 is modified (asymmetric dimethylarginine). Residues M738–I747 show a composition bias toward acidic residues.

This sequence belongs to the Mediator complex subunit 25 family. In terms of assembly, component of the Mediator complex, which is composed of MED1, MED4, MED6, MED7, MED8, MED9, MED10, MED11, MED12, MED13, MED13L, MED14, MED15, MED16, MED17, MED18, MED19, MED20, MED21, MED22, MED23, MED24, MED25, MED26, MED27, MED29, MED30, MED31, CCNC, CDK8 and CDC2L6/CDK11. The MED12, MED13, CCNC and CDK8 subunits form a distinct module termed the CDK8 module. Mediator containing the CDK8 module is less active than Mediator lacking this module in supporting transcriptional activation. Individual preparations of the Mediator complex lacking one or more distinct subunits have been variously termed ARC, CRSP, DRIP, PC2, SMCC and TRAP. Interacts with CREBBP. Interacts with ESR1, GR, RARA, RXRA and THRB in a ligand-dependent fashion. Binds the Herpes simplex virus activator VP16. As to expression, ubiquitously expressed. Highest levels in brain, heart, kidney, peripheral leukocytes, placenta, skeletal muscle and spleen.

It is found in the nucleus. Functionally, component of the Mediator complex, a coactivator involved in the regulated transcription of nearly all RNA polymerase II-dependent genes. Mediator functions as a bridge to convey information from gene-specific regulatory proteins to the basal RNA polymerase II transcription machinery. Mediator is recruited to promoters by direct interactions with regulatory proteins and serves as a scaffold for the assembly of a functional preinitiation complex with RNA polymerase II and the general transcription factors. Required for RARA/RXRA-mediated transcription. This chain is Mediator of RNA polymerase II transcription subunit 25 (MED25), found in Homo sapiens (Human).